The following is a 476-amino-acid chain: NAD(+) hydrolase ThsA (476 aa).

A Deacetylase sirtuin-type domain is found at 4 to 283; the sequence is NPIVELFIKD…QRIENNIKTK (280 aa). Positions 23, 114, and 152 each coordinate NAD(+). His-152 functions as the Proton acceptor in the catalytic mechanism. The SLOG (STALD) domain, binds 3'cADPR stretch occupies residues 284–476; it reads TVFLSGSAVE…IIEFVEILSN (193 aa). The 3'cADPR site is built by Gly-289, Ser-290, Leu-326, Phe-357, Arg-371, Lys-388, Gly-399, and Glu-403.

The protein belongs to the soluble Thoeris ThsA family. As to quaternary structure, homotetramer formed by dimer of dimers; homooctamers are occasionally seen. Not seen to interact with ThsB. In the absence of the signal generated by ThsB, 63% monomer and 20% homotetramer; in the presence of the ThsB signal product 40% of the protein is dimeric. Homotetramer in solution; probably dimerizes via the N-terminal sirtuin-like domain.

It localises to the cytoplasm. The enzyme catalyses NAD(+) + H2O = ADP-D-ribose + nicotinamide + H(+). Its activity is regulated as follows. Activated by a molecule generated by endogenous ThsB (AC J8G8J6) or ThsB' (AC J8CSK2); activation in vitro is 50-100x more sensitive to 3' cyclic ADP-D-ribose (3'cADPR) than 2'cADPR. 3'cADPR activates the NADase function of ThsA by binding to the SLOG domain, which changes its tetramer organization, allowing NAD to access the active site. Also activated by a signal molecule generated by B.dafuensis TIR1 (AC A0A5B8Z670) and TIR2 (AC A0A5B8Z260), and by BdTIR (AC I1GTC2), a plant protein involved in defense against bacterial infection. The signal produced by BdTIR is probably 2'cADPR, which activates this protein, the signal produced by endogenous ThsB' is probably 3'cADPR. Its function is as follows. NAD(+) hydrolyzing component (NADase) of the Thoeris antiviral defense system, composed of ThsA and ThsB. Activated by a signal molecule generated by endogenous ThsB (AC J8G8J6) or ThsB' (AC J8CSK2, probably 3'cADPR), by TIR1 and TIR2 from B.dafuensis or by BdTIR from B.distachyon (AC I1GTC2, probably 2'cADPR). Upon activation binds and hydrolyzes NAD(+), leading to cell death and inhibition of phage replication. Not seen to bind DNA. Activation is 50-100x more sensitive to 3' cyclic ADP-D-ribose (3'cADPR) than 2'cADPR. In another paper ThsA is not activated by any tested cADPR isomer, although it binds 3'cADPR; it was suggested the protein is already in a fully active state. Expression of ThsA and ThsB in B.subtilis (strain BEST7003) confers resistance to phages phi29, SBSphiC, SBSphiJ and SPO1. At multiplicity of infection (MOI) of 0.05 Thoeris-encoding cultures grow normally when infected with SPO1, at MOI 5 cultures collapse prematurely by 90 minutes post-infection, thus the phage are not able to complete a replication cycle. NAD(+) levels fall and ADP-D-ribose levels rise 60 minutes post-infection. Thoeris cultures eventually recover, but retain the same susceptibility to SPO1. The chain is NAD(+) hydrolase ThsA from Bacillus cereus (strain MSX-D12).